The primary structure comprises 269 residues: Flagellar hook-basal body complex protein FlhP (269 aa).

The stretch at 7-65 (TASTTLNQLQQQIDTISSNLSNSNTTGYKAKDTNFSELVRQQFDQVDEKNEEVAKARKT) forms a coiled coil.

It belongs to the flagella basal body rod proteins family.

The polypeptide is Flagellar hook-basal body complex protein FlhP (flhP) (Bacillus subtilis (strain 168)).